The chain runs to 339 residues: DNA-directed RNA polymerase subunit alpha (339 aa).

The tract at residues 1-233 is alpha N-terminal domain (alpha-NTD); sequence MVREEITGST…DLFLPFLHTE (233 aa). Residues 264-339 are alpha C-terminal domain (alpha-CTD); sequence KKGIPLNCIF…IDLPKNKFSL (76 aa).

This sequence belongs to the RNA polymerase alpha chain family. As to quaternary structure, in plastids the minimal PEP RNA polymerase catalytic core is composed of four subunits: alpha, beta, beta', and beta''. When a (nuclear-encoded) sigma factor is associated with the core the holoenzyme is formed, which can initiate transcription.

Its subcellular location is the plastid. The protein localises to the chloroplast. It catalyses the reaction RNA(n) + a ribonucleoside 5'-triphosphate = RNA(n+1) + diphosphate. DNA-dependent RNA polymerase catalyzes the transcription of DNA into RNA using the four ribonucleoside triphosphates as substrates. The protein is DNA-directed RNA polymerase subunit alpha of Zea mays (Maize).